Here is a 291-residue protein sequence, read N- to C-terminus: HTH-type transcriptional activator AmpR (291 aa).

The region spanning Ile6–Thr63 is the HTH lysR-type domain. A DNA-binding region (H-T-H motif) is located at residues Phe23–Lys42.

Belongs to the LysR transcriptional regulatory family.

It localises to the cytoplasm. Regulates the expression of the beta-lactamase gene. Represses cephalosporinase (AmpC) in the presence of beta-lactams and induces it in the absence of them. This Citrobacter freundii protein is HTH-type transcriptional activator AmpR (ampR).